The primary structure comprises 60 residues: Large ribosomal subunit protein uL30 (60 aa).

Belongs to the universal ribosomal protein uL30 family. As to quaternary structure, part of the 50S ribosomal subunit.

This chain is Large ribosomal subunit protein uL30, found in Lactobacillus johnsonii (strain CNCM I-12250 / La1 / NCC 533).